A 906-amino-acid polypeptide reads, in one-letter code: Cadherin-2 (906 aa).

A signal peptide spans 1–25; the sequence is MCRIAGAPRTLLPLLAALLQASVEA. A propeptide spanning residues 26–159 is cleaved from the precursor; that stretch reads SGEIALCKTG…HNGYLQRQKR (134 aa). 2 positions are modified to phosphoserine: serine 96 and serine 135. Cadherin domains follow at residues 160–267, 268–382, 383–497, 498–603, and 604–714; these read DWVI…RPEF, LHQV…PPEF, TAMT…NPYF, APNP…DNAP, and QVLP…DVDR. The Extracellular segment spans residues 160-724; the sequence is DWVIPPINLP…IVGAGLGTGA (565 aa). A Ca(2+)-binding site is contributed by glutamate 170. Asparagine 190 carries N-linked (GlcNAc...) asparagine glycosylation. Ca(2+) contacts are provided by aspartate 226, glutamate 228, aspartate 259, methionine 260, asparagine 261, aspartate 262, and asparagine 263. The N-linked (GlcNAc...) asparagine glycan is linked to asparagine 273. Residues aspartate 293, aspartate 295, and asparagine 301 each contribute to the Ca(2+) site. Asparagine 325 carries an N-linked (GlcNAc...) asparagine glycan. Aspartate 353 serves as a coordination point for Ca(2+). 5 N-linked (GlcNAc...) asparagine glycosylation sites follow: asparagine 402, asparagine 572, asparagine 622, asparagine 651, and asparagine 692. A helical transmembrane segment spans residues 725–745; sequence IIAILLCIIILLILVLMFVVW. Over 746-906 the chain is Cytoplasmic; the sequence is MKRRDKERQA…LAEMYGGGDD (161 aa). Residues 863 to 880 show a composition bias toward low complexity; sequence SGSTAGSLSSLNSSSSGG. Positions 863 to 884 are disordered; the sequence is SGSTAGSLSSLNSSSSGGEQDY.

In terms of assembly, homodimer (via extracellular region). Can also form heterodimers with other cadherins (via extracellular region). Dimerization occurs in trans, i.e. with a cadherin chain from another cell. Interacts with CDCP1. Interacts with PCDH8; this complex may also include TAOK2. The interaction with PCDH8 may lead to internalization through TAOK2/p38 MAPK pathway. Identified in a complex containing FGFR4, NCAM1, CDH2, PLCG1, FRS2, SRC, SHC1, GAP43 and CTTN. May interact with OBSCN (via protein kinase domain 2). Interacts with FBXO45. In terms of processing, cleaved by MMP24. Ectodomain cleavage leads to the generation of a soluble 90 kDa N-terminal soluble fragment and a 45 kDa membrane-bound C-terminal fragment 1 (CTF1), which is further cleaved by gamma-secretase into a 35 kDa. Cleavage in neural stem cells by MMP24 affects CDH2-mediated anchorage of neural stem cells to ependymocytes in the adult subependymal zone, leading to modulate neural stem cell quiescence. Post-translationally, may be phosphorylated by OBSCN.

The protein localises to the cell membrane. It is found in the sarcolemma. The protein resides in the cell junction. Its subcellular location is the cell surface. It localises to the desmosome. The protein localises to the adherens junction. In terms of biological role, calcium-dependent cell adhesion protein; preferentially mediates homotypic cell-cell adhesion by dimerization with a CDH2 chain from another cell. Cadherins may thus contribute to the sorting of heterogeneous cell types. Acts as a regulator of neural stem cells quiescence by mediating anchorage of neural stem cells to ependymocytes in the adult subependymal zone: upon cleavage by MMP24, CDH2-mediated anchorage is affected, leading to modulate neural stem cell quiescence. Plays a role in cell-to-cell junction formation between pancreatic beta cells and neural crest stem (NCS) cells, promoting the formation of processes by NCS cells. Required for proper neurite branching. Required for pre- and postsynaptic organization. CDH2 may be involved in neuronal recognition mechanism. In hippocampal neurons, may regulate dendritic spine density. This is Cadherin-2 (CDH2) from Otolemur garnettii (Small-eared galago).